The sequence spans 328 residues: 4-hydroxythreonine-4-phosphate dehydrogenase (328 aa).

T125 lines the substrate pocket. Positions 160, 203, and 269 each coordinate a divalent metal cation. Residues K277, N286, and R295 each contribute to the substrate site.

It belongs to the PdxA family. In terms of assembly, homodimer. The cofactor is a divalent metal cation.

It is found in the cytoplasm. The enzyme catalyses 4-(phosphooxy)-L-threonine + NAD(+) = 3-amino-2-oxopropyl phosphate + CO2 + NADH. It participates in cofactor biosynthesis; pyridoxine 5'-phosphate biosynthesis; pyridoxine 5'-phosphate from D-erythrose 4-phosphate: step 4/5. Its function is as follows. Catalyzes the NAD(P)-dependent oxidation of 4-(phosphooxy)-L-threonine (HTP) into 2-amino-3-oxo-4-(phosphooxy)butyric acid which spontaneously decarboxylates to form 3-amino-2-oxopropyl phosphate (AHAP). The sequence is that of 4-hydroxythreonine-4-phosphate dehydrogenase from Synechococcus sp. (strain RCC307).